The sequence spans 706 residues: D-(-)-3-hydroxybutyrate oligomer hydrolase (706 aa).

An N-terminal signal peptide occupies residues 1 to 32 (MTTTSKNCLTLTSIAAAVAAVLVLSACGGGSA). Ser311 functions as the Charge relay system in the catalytic mechanism.

The protein belongs to the D-(-)-3-hydroxybutyrate oligomer hydrolase family.

Its subcellular location is the secreted. It carries out the reaction (3R)-hydroxybutanoate dimer + H2O = 2 (R)-3-hydroxybutanoate + H(+). Its pathway is lipid metabolism; butanoate metabolism. Its function is as follows. Participates in the degradation of poly-3-hydroxybutyrate (PHB). It works downstream of poly(3-hydroxybutyrate) depolymerase, hydrolyzing D(-)-3-hydroxybutyrate oligomers of various length (3HB-oligomers) into 3HB-monomers. This is D-(-)-3-hydroxybutyrate oligomer hydrolase from Polaromonas sp. (strain JS666 / ATCC BAA-500).